The following is a 181-amino-acid chain: Vacuolar ATPase assembly protein VMA22 (181 aa).

Position 2 is an N-acetylalanine (S2). Basic and acidic residues-rich tracts occupy residues 93–107 and 114–125; these read AQDKQEKKEEEDNKL and TKPEKQKTQSHK. Positions 93–125 are disordered; sequence AQDKQEKKEEEDNKLTQRKKGTKPEKQKTQSHK.

Functionally, required for V-ATPase activity. This Saccharomyces cerevisiae (strain ATCC 204508 / S288c) (Baker's yeast) protein is Vacuolar ATPase assembly protein VMA22 (VMA22).